A 688-amino-acid polypeptide reads, in one-letter code: Elongation factor G (688 aa).

One can recognise a tr-type G domain in the interval Asp8–Leu282. GTP-binding positions include Ala17–Thr24, Asp81–His85, and Asn135–Asp138.

Belongs to the TRAFAC class translation factor GTPase superfamily. Classic translation factor GTPase family. EF-G/EF-2 subfamily.

It is found in the cytoplasm. Its function is as follows. Catalyzes the GTP-dependent ribosomal translocation step during translation elongation. During this step, the ribosome changes from the pre-translocational (PRE) to the post-translocational (POST) state as the newly formed A-site-bound peptidyl-tRNA and P-site-bound deacylated tRNA move to the P and E sites, respectively. Catalyzes the coordinated movement of the two tRNA molecules, the mRNA and conformational changes in the ribosome. The protein is Elongation factor G of Clostridium botulinum (strain Alaska E43 / Type E3).